The sequence spans 91 residues: Acylphosphatase (91 aa).

In terms of domain architecture, Acylphosphatase-like spans Cys5 to Leu91. Asn38 is an active-site residue.

The protein belongs to the acylphosphatase family.

The enzyme catalyses an acyl phosphate + H2O = a carboxylate + phosphate + H(+). The protein is Acylphosphatase (acyP) of Vibrio cholerae serotype O1 (strain ATCC 39541 / Classical Ogawa 395 / O395).